A 307-amino-acid chain; its full sequence is Cytochrome c1 2, heme protein, mitochondrial (307 aa).

Residues 1-64 (MVGGGVIRQL…LLSFSTVASA (64 aa)) constitute a mitochondrion transit peptide. The Mitochondrial intermembrane portion of the chain corresponds to 65-270 (DEAEHGLECP…EPEMEERKLM (206 aa)). Positions 90–197 (ASIRRGHQVY…NGQNYVFALL (108 aa)) constitute a Cytochrome c domain. 4 residues coordinate heme c: cysteine 103, cysteine 106, histidine 107, and methionine 226. The chain crosses the membrane as a helical span at residues 271-288 (GFKWIFLLSLALLQAAYY). At 289-307 (RRLKWSVLKSRKLVLDVVN) the chain is on the mitochondrial matrix side.

The protein belongs to the cytochrome c family. As to quaternary structure, component of the ubiquinol-cytochrome c oxidoreductase (cytochrome b-c1 complex, complex III, CIII), a multisubunit enzyme composed of 10 subunits. The complex is composed of 3 respiratory subunits cytochrome b (MT-CYB), cytochrome c1 (CYC1-1 or CYC1-2) and Rieske protein (UCR1-1 or UCR1-2), 2 core protein subunits MPPalpha1 (or MPPalpha2) and MPPB, and 5 low-molecular weight protein subunits QCR7-1 (or QCR7-2), UCRQ-1 (or UCRQ-2), QCR9, UCRY and probably QCR6-1 (or QCR6-2). The complex exists as an obligatory dimer and forms supercomplexes (SCs) in the inner mitochondrial membrane with NADH-ubiquinone oxidoreductase (complex I, CI), resulting in different assemblies (supercomplexes SCI(1)III(2) and SCI(2)III(4)). Binds 1 heme c group covalently per subunit.

It localises to the mitochondrion inner membrane. Its function is as follows. Component of the ubiquinol-cytochrome c oxidoreductase, a multisubunit transmembrane complex that is part of the mitochondrial electron transport chain which drives oxidative phosphorylation. The respiratory chain contains 3 multisubunit complexes succinate dehydrogenase (complex II, CII), ubiquinol-cytochrome c oxidoreductase (cytochrome b-c1 complex, complex III, CIII) and cytochrome c oxidase (complex IV, CIV), that cooperate to transfer electrons derived from NADH and succinate to molecular oxygen, creating an electrochemical gradient over the inner membrane that drives transmembrane transport and the ATP synthase. The cytochrome b-c1 complex catalyzes electron transfer from ubiquinol to cytochrome c, linking this redox reaction to translocation of protons across the mitochondrial inner membrane, with protons being carried across the membrane as hydrogens on the quinol. In the process called Q cycle, 2 protons are consumed from the matrix, 4 protons are released into the intermembrane space and 2 electrons are passed to cytochrome c. Cytochrome c1 is a catalytic core subunit containing a c-type heme. It transfers electrons from the [2Fe-2S] iron-sulfur cluster of the Rieske protein to cytochrome c. The chain is Cytochrome c1 2, heme protein, mitochondrial (CYC1-2) from Arabidopsis thaliana (Mouse-ear cress).